Here is a 312-residue protein sequence, read N- to C-terminus: Ornithine carbamoyltransferase (312 aa).

Carbamoyl phosphate is bound by residues 57-60 (STRT), glutamine 84, arginine 108, and 135-138 (HPCQ). Residues asparagine 166, aspartate 226, and 230–231 (SM) each bind L-ornithine. Carbamoyl phosphate is bound by residues 265–266 (CL) and arginine 293.

Belongs to the aspartate/ornithine carbamoyltransferase superfamily. OTCase family.

Its subcellular location is the cytoplasm. The enzyme catalyses carbamoyl phosphate + L-ornithine = L-citrulline + phosphate + H(+). The protein operates within amino-acid biosynthesis; L-arginine biosynthesis; L-arginine from L-ornithine and carbamoyl phosphate: step 1/3. Functionally, reversibly catalyzes the transfer of the carbamoyl group from carbamoyl phosphate (CP) to the N(epsilon) atom of ornithine (ORN) to produce L-citrulline. This is Ornithine carbamoyltransferase from Brucella ovis (strain ATCC 25840 / 63/290 / NCTC 10512).